We begin with the raw amino-acid sequence, 489 residues long: MMEEELYKSVIVTAKSVRSVLLEETSNVEDCQKNLNALGQIVSASSQSQEYRSQILANNGLPDVLVEILNRSFQDNVPTEELKFTLYIRLMRGILLLARNLVITKQFVEFSSILSSLENFNQKVSHNNEFYSKTLVVYIQFLANMSQITREQNIVAEIVETFFKNEDLMSLIANDDQMKMPFAAFLKNILSNSDNLYDVLTHDDTILRYTISELDKADIHNEDLDQYSSLLILTFQNIIAHETYSKWLKRIDCESAEFSRIMKLNQVIVTSKEDWDNYQLTAMLAWIFDNFLVFSEISKSILLSSIYDPLELKRVHLNLIILLDCLSDLGKFEATKQFLEHYNAIEELISLLRVVHESVDRKTLKNKEKIEETVGKKEFPQVKSLIIEVIAFLVHGSFEIQEKMRELHGLELVLSNCMIDDNDPFIKERAIVCVKFLLANNEKNQQFVADLEAKQTVDDDALKEVGYEVQIEDGNVKLRKTENQKLQEI.

The protein belongs to the ataxin-10 family.

The protein resides in the cytoplasm. In terms of biological role, may play a role in the regulation of cytokinesis. The polypeptide is Ataxin-10 homolog (CTR86) (Debaryomyces hansenii (strain ATCC 36239 / CBS 767 / BCRC 21394 / JCM 1990 / NBRC 0083 / IGC 2968) (Yeast)).